The following is a 518-amino-acid chain: Protein nucleotidyltransferase YdiU (518 aa).

The span at 1–10 shows a compositional bias: basic and acidic residues; the sequence is MTHLHFDNRL. Residues 1-25 are disordered; it reads MTHLHFDNRLRQQLPGDPEEGARRR. 8 residues coordinate ATP: Gly100, Gly102, Arg103, Lys123, Asp135, Gly136, Arg193, and Arg200. Asp270 serves as the catalytic Proton acceptor. Residues Asn271 and Asp280 each contribute to the Mg(2+) site. ATP is bound at residue Asp280.

This sequence belongs to the SELO family. Requires Mg(2+) as cofactor. The cofactor is Mn(2+).

It catalyses the reaction L-seryl-[protein] + ATP = 3-O-(5'-adenylyl)-L-seryl-[protein] + diphosphate. The catalysed reaction is L-threonyl-[protein] + ATP = 3-O-(5'-adenylyl)-L-threonyl-[protein] + diphosphate. The enzyme catalyses L-tyrosyl-[protein] + ATP = O-(5'-adenylyl)-L-tyrosyl-[protein] + diphosphate. It carries out the reaction L-histidyl-[protein] + UTP = N(tele)-(5'-uridylyl)-L-histidyl-[protein] + diphosphate. It catalyses the reaction L-seryl-[protein] + UTP = O-(5'-uridylyl)-L-seryl-[protein] + diphosphate. The catalysed reaction is L-tyrosyl-[protein] + UTP = O-(5'-uridylyl)-L-tyrosyl-[protein] + diphosphate. In terms of biological role, nucleotidyltransferase involved in the post-translational modification of proteins. It can catalyze the addition of adenosine monophosphate (AMP) or uridine monophosphate (UMP) to a protein, resulting in modifications known as AMPylation and UMPylation. This chain is Protein nucleotidyltransferase YdiU, found in Xanthomonas euvesicatoria pv. vesicatoria (strain 85-10) (Xanthomonas campestris pv. vesicatoria).